Reading from the N-terminus, the 267-residue chain is Shikimate dehydrogenase (NADP(+)) (267 aa).

Shikimate is bound by residues 14–16 (SLS) and threonine 61. The Proton acceptor role is filled by lysine 65. Shikimate contacts are provided by asparagine 86 and aspartate 101. Residues 126-130 (GAGGA), 150-155 (NRTHSK), and leucine 213 each bind NADP(+). Tyrosine 215 contributes to the shikimate binding site. Residue glycine 236 coordinates NADP(+).

The protein belongs to the shikimate dehydrogenase family. Homodimer.

The catalysed reaction is shikimate + NADP(+) = 3-dehydroshikimate + NADPH + H(+). It functions in the pathway metabolic intermediate biosynthesis; chorismate biosynthesis; chorismate from D-erythrose 4-phosphate and phosphoenolpyruvate: step 4/7. In terms of biological role, involved in the biosynthesis of the chorismate, which leads to the biosynthesis of aromatic amino acids. Catalyzes the reversible NADPH linked reduction of 3-dehydroshikimate (DHSA) to yield shikimate (SA). This is Shikimate dehydrogenase (NADP(+)) from Vesicomyosocius okutanii subsp. Calyptogena okutanii (strain HA).